The primary structure comprises 290 residues: 33 kDa chaperonin (290 aa).

2 disulfides stabilise this stretch: Cys-235-Cys-237 and Cys-268-Cys-271.

This sequence belongs to the HSP33 family. Under oxidizing conditions two disulfide bonds are formed involving the reactive cysteines. Under reducing conditions zinc is bound to the reactive cysteines and the protein is inactive.

It is found in the cytoplasm. Functionally, redox regulated molecular chaperone. Protects both thermally unfolding and oxidatively damaged proteins from irreversible aggregation. Plays an important role in the bacterial defense system toward oxidative stress. The chain is 33 kDa chaperonin from Streptococcus pneumoniae (strain JJA).